The primary structure comprises 152 residues: Large ribosomal subunit protein bL9 (152 aa).

It belongs to the bacterial ribosomal protein bL9 family.

Functionally, binds to the 23S rRNA. The protein is Large ribosomal subunit protein bL9 of Microcystis aeruginosa (strain NIES-843 / IAM M-2473).